A 416-amino-acid polypeptide reads, in one-letter code: 4-hydroxy-3-methylbut-2-en-1-yl diphosphate synthase (flavodoxin) (416 aa).

[4Fe-4S] cluster contacts are provided by cysteine 304, cysteine 307, cysteine 350, and glutamate 357.

It belongs to the IspG family. [4Fe-4S] cluster serves as cofactor.

It carries out the reaction (2E)-4-hydroxy-3-methylbut-2-enyl diphosphate + oxidized [flavodoxin] + H2O + 2 H(+) = 2-C-methyl-D-erythritol 2,4-cyclic diphosphate + reduced [flavodoxin]. It functions in the pathway isoprenoid biosynthesis; isopentenyl diphosphate biosynthesis via DXP pathway; isopentenyl diphosphate from 1-deoxy-D-xylulose 5-phosphate: step 5/6. Functionally, converts 2C-methyl-D-erythritol 2,4-cyclodiphosphate (ME-2,4cPP) into 1-hydroxy-2-methyl-2-(E)-butenyl 4-diphosphate. This is 4-hydroxy-3-methylbut-2-en-1-yl diphosphate synthase (flavodoxin) from Rhizobium johnstonii (strain DSM 114642 / LMG 32736 / 3841) (Rhizobium leguminosarum bv. viciae).